The sequence spans 281 residues: Small ribosomal subunit protein uS2 (281 aa).

Residues 229–281 (RSGANKTEGEAAEQPMAAWEKELLTNEAPAEASAEAAAPAAAEGETAEAPKAE) are disordered. Low complexity predominate over residues 255–275 (EAPAEASAEAAAPAAAEGETA).

This sequence belongs to the universal ribosomal protein uS2 family.

The chain is Small ribosomal subunit protein uS2 from Bifidobacterium longum subsp. infantis (strain ATCC 15697 / DSM 20088 / JCM 1222 / NCTC 11817 / S12).